Here is a 179-residue protein sequence, read N- to C-terminus: Bifunctional protein PyrR (179 aa).

A PRPP-binding motif is present at residues 99-111; that stretch reads VILVDDVLYTGRT.

Belongs to the purine/pyrimidine phosphoribosyltransferase family. PyrR subfamily. As to quaternary structure, homodimer and homohexamer; in equilibrium.

It catalyses the reaction UMP + diphosphate = 5-phospho-alpha-D-ribose 1-diphosphate + uracil. In terms of biological role, regulates transcriptional attenuation of the pyrimidine nucleotide (pyr) operon by binding in a uridine-dependent manner to specific sites on pyr mRNA. This disrupts an antiterminator hairpin in the RNA and favors formation of a downstream transcription terminator, leading to a reduced expression of downstream genes. Also displays a weak uracil phosphoribosyltransferase activity which is not physiologically significant. In Brevibacillus brevis (strain 47 / JCM 6285 / NBRC 100599), this protein is Bifunctional protein PyrR.